The primary structure comprises 246 residues: Probable transcriptional regulatory protein RB5500 (246 aa).

It belongs to the TACO1 family.

Its subcellular location is the cytoplasm. This chain is Probable transcriptional regulatory protein RB5500, found in Rhodopirellula baltica (strain DSM 10527 / NCIMB 13988 / SH1).